Here is a 338-residue protein sequence, read N- to C-terminus: Pyridoxal 5'-phosphate synthase subunit PdxS (338 aa).

Aspartate 66 contributes to the D-ribose 5-phosphate binding site. The active-site Schiff-base intermediate with D-ribose 5-phosphate is lysine 123. Residue glycine 195 participates in D-ribose 5-phosphate binding. D-glyceraldehyde 3-phosphate is bound at residue lysine 207. Residues glycine 256 and 277-278 each bind D-ribose 5-phosphate; that span reads GS.

It belongs to the PdxS/SNZ family. In terms of assembly, in the presence of PdxT, forms a dodecamer of heterodimers.

The enzyme catalyses aldehydo-D-ribose 5-phosphate + D-glyceraldehyde 3-phosphate + L-glutamine = pyridoxal 5'-phosphate + L-glutamate + phosphate + 3 H2O + H(+). The protein operates within cofactor biosynthesis; pyridoxal 5'-phosphate biosynthesis. Its function is as follows. Catalyzes the formation of pyridoxal 5'-phosphate from ribose 5-phosphate (RBP), glyceraldehyde 3-phosphate (G3P) and ammonia. The ammonia is provided by the PdxT subunit. Can also use ribulose 5-phosphate and dihydroxyacetone phosphate as substrates, resulting from enzyme-catalyzed isomerization of RBP and G3P, respectively. The chain is Pyridoxal 5'-phosphate synthase subunit PdxS from Saccharolobus islandicus (strain L.S.2.15 / Lassen #1) (Sulfolobus islandicus).